A 57-amino-acid polypeptide reads, in one-letter code: MLGWVVTFLVIALIAGILGFGGVAGASIEIAKIIFFIAIVLFLVSAVVGLARGRTRV.

A run of 2 helical transmembrane segments spans residues 1-21 (MLGW…LGFG) and 30-50 (IAKI…VVGL).

Belongs to the UPF0391 family.

The protein localises to the cell membrane. In Bradyrhizobium sp. (strain ORS 278), this protein is UPF0391 membrane protein BRADO5617.